The sequence spans 258 residues: MATGRAHRPATRSRGIPEATVARLPLYLRALTALSERSVPTVSSEELAAAAGVNSAKLRKDFSYLGSYGTRGVGYDVEYLVYQISRELGLTQDWPVVIVGIGNLGAALANYGGFASRGFRVAALIDADPGMAGKPVAGIPVQHTDELEKIIQDDGVSIGVIATPAGAAQQVCDRLVAAGVTSILNFAPTVLNVPEGVDVRKVDLSIELQILAFHEQRKAGEEAAADGAAPPVAARKQQRSTGSADQGPDGDVPAVMPA.

Positions 26–65 form a DNA-binding region, H-T-H motif; that stretch reads LYLRALTALSERSVPTVSSEELAAAAGVNSAKLRKDFSYL. 100 to 105 provides a ligand contact to NAD(+); that stretch reads GIGNLG. The disordered stretch occupies residues 219-258; that stretch reads AGEEAAADGAAPPVAARKQQRSTGSADQGPDGDVPAVMPA. Low complexity predominate over residues 225–234; it reads ADGAAPPVAA.

This sequence belongs to the transcriptional regulatory Rex family. As to quaternary structure, homodimer.

It is found in the cytoplasm. Modulates transcription of respiratory genes in response to changes in cellular NADH/NAD(+) redox state. Binds to the DNA sequence motif 5'-TGTGAACGCGTTCACA-3' in the promoter of the cydABCD operon. May play a general role as a sensor of cellular redox balance. This Streptomyces coelicolor (strain ATCC BAA-471 / A3(2) / M145) protein is Redox-sensing transcriptional repressor Rex.